A 319-amino-acid polypeptide reads, in one-letter code: Methionyl-tRNA formyltransferase (319 aa).

Residue 116–119 (SLLP) participates in (6S)-5,6,7,8-tetrahydrofolate binding.

This sequence belongs to the Fmt family.

It catalyses the reaction L-methionyl-tRNA(fMet) + (6R)-10-formyltetrahydrofolate = N-formyl-L-methionyl-tRNA(fMet) + (6S)-5,6,7,8-tetrahydrofolate + H(+). Its function is as follows. Attaches a formyl group to the free amino group of methionyl-tRNA(fMet). The formyl group appears to play a dual role in the initiator identity of N-formylmethionyl-tRNA by promoting its recognition by IF2 and preventing the misappropriation of this tRNA by the elongation apparatus. The sequence is that of Methionyl-tRNA formyltransferase from Wigglesworthia glossinidia brevipalpis.